A 1431-amino-acid chain; its full sequence is Trophinin (1431 aa).

Disordered stretches follow at residues 1–24 (MDRRNDYGYRVPLFQGPLPPPGSL), 341–365 (SRARKAATKARATESQTPNADQGAQ), and 401–433 (PTTRTRGKRNRKSKHLNGDERSGSNYRRIPWGR). Residues 405 to 415 (TRGKRNRKSKH) are compositionally biased toward basic residues. Residues 444-642 (LQERANKLVK…KDWAVQYREA (199 aa)) form the MAGE domain. Repeat copies occupy residues 751-760 (FSGGPGITFG) and 769-778 (FSNTASISFG). The tract at residues 751 to 1430 (FSGGPGITFG…ASLGACGFSY (680 aa)) is 62 X 10 AA approximate tandem repeats. One copy of the 3; approximate repeat lies at 779-786 (GTLSTSSS). 2 repeat units span residues 787-796 (FSSAASISFG) and 805-814 (FSSEASISFG). One copy of the 6; approximate repeat lies at 823–833 (FSGGVSSSFSG). The stretch at 841 to 850 (FSGGASSGFG) is repeat 7. The 8; approximate repeat unit spans residues 859–870 (FSGVLSTSTSFG). One copy of the 9; approximate repeat lies at 879–890 (FSSALSTSTGFG). Repeat copies occupy residues 901-910 (GSPSSSGSFG), 911-920 (GTLSTSICFG), 921-930 (GSPCTSTGFG), 931-940 (GTLSTSVSFG), and 941-950 (GSSSTSANFG). Residues 951-960 (GTLSTSICFD) form a 15; approximate repeat. 6 tandem repeats follow at residues 961–970 (GSPSTGAGFG), 971–980 (GALNTSASFG), 981–990 (SVLNTSTGFG), 991–1000 (GAMSTSADFG), 1001–1010 (GTLSTSVCFG), and 1011–1020 (GSPGTSVSFG). One copy of the 22; approximate repeat lies at 1021–1030 (SALNTNAGYG). Tandem repeats lie at residues 1031–1040 (GAVSTNTDFG), 1041–1050 (GTLSTSVCFG), 1051–1060 (GSPSTSAGFG), and 1061–1070 (GALNTNASFG). The 27; approximate repeat unit spans residues 1071-1080 (CAVSTSASFS). One copy of the 28; approximate repeat lies at 1081–1090 (GAVSTSACFS). Tandem repeats lie at residues 1091-1100 (GAPITNPGFG), 1101-1110 (GAFSTSAGFG), 1111-1120 (GALSTAADFG), 1121-1130 (GTPSNSIGFG), 1131-1140 (AAPSTSVSFG), 1141-1150 (GAHGTSLCFG), 1151-1160 (GAPSTSLCFG), and 1161-1170 (SASNTNLCFG). A 37; approximate repeat occupies 1171–1180 (GPPSTSACFS). A 38; approximate repeat occupies 1181 to 1190 (GATSPSFCDG). 3 repeat units span residues 1191 to 1200 (PSTSTGFSFG), 1201 to 1210 (NGLSTNAGFG), and 1211 to 1220 (GGLNTSAGFG). A 42; approximate repeat occupies 1221-1230 (GGLGTSAGFS). The 43; approximate repeat unit spans residues 1231 to 1240 (GGLSTSSGFD). 2 tandem repeats follow at residues 1241 to 1250 (GGLGTSAGFG) and 1251 to 1260 (GGPGTSTGFG). The stretch at 1261–1270 (GGLGTSAGFS) is one 46; approximate repeat. 3 consecutive repeat copies span residues 1271-1280 (GGLGTSAGFG), 1281-1290 (GGLVTSDGFG), and 1291-1300 (GGLGTNASFG). The stretch at 1301–1310 (STLGTSAGFS) is one 50; approximate repeat. Repeat unit 51 spans residues 1311-1320 (GGLSTSDGFG). One copy of the 52; approximate repeat lies at 1321–1330 (SRPNASFDRG). One copy of the 53; approximate repeat lies at 1331–1340 (LSTIIGFGSG). Residues 1341 to 1350 (SNTSTGFTGE) form a 54; approximate repeat. Residues 1342–1363 (NTSTGFTGEPSTSTGFSSGPSS) are compositionally biased toward low complexity. Positions 1342–1365 (NTSTGFTGEPSTSTGFSSGPSSIV) are disordered. The 55; approximate repeat unit spans residues 1351–1360 (PSTSTGFSSG). The stretch at 1361–1370 (PSSIVGFSGG) is one 56; approximate repeat. The 57; approximate repeat unit spans residues 1371–1380 (PSTGVGFCSG). Residues 1381–1390 (PSTSGFSGGP) form a 58; approximate repeat. Residues 1391–1400 (STGAGFGGGP) form a 59; approximate repeat. Residues 1401-1410 (NTGAGFGGGP) form a 60; approximate repeat. The 61; approximate repeat unit spans residues 1411–1420 (STSAGFGSGA). A 62; approximate repeat occupies 1421–1430 (ASLGACGFSY).

Directly binds bystin, and indirectly tastin. In terms of tissue distribution, strong expression at implantation sites. Found in the placenta from the sixth week of pregnancy. Was localized in the cytoplasm of the syncytiotrophoblast in the chorionic villi and in endometrial decidual cells at the uteroplacental interface. After week 10, the level decreased and then disappeared from placental villi. Also found in macrophages.

Functionally, could be involved with bystin and tastin in a cell adhesion molecule complex that mediates an initial attachment of the blastocyst to uterine epithelial cells at the time of the embryo implantation. Directly responsible for homophilic cell adhesion. The sequence is that of Trophinin (TRO) from Homo sapiens (Human).